The primary structure comprises 862 residues: Mismatch repair endonuclease PMS2 (862 aa).

5 residues coordinate ATP: Asn-45, Asp-70, Glu-109, Ala-110, and Leu-111. Composition is skewed to basic and acidic residues over residues 391 to 401, 408 to 444, 484 to 495, and 528 to 552; these read DLEKPMVEKQD, TGEE…EPRR, PTDRAEVEKDSG, and GSQE…VDCH. Residues 391-552 are disordered; the sequence is DLEKPMVEKQ…DDSFSDVDCH (162 aa). Thr-573 carries the phosphothreonine modification. A Nuclear localization signal motif is present at residues 577 to 580; that stretch reads KRFK. At Thr-597 the chain carries Phosphothreonine.

This sequence belongs to the DNA mismatch repair MutL/HexB family. In terms of assembly, heterodimer of PMS2 and MLH1 (MutL alpha); this interaction is required for the stability of both partners. Forms a ternary complex with MutS alpha (MSH2-MSH6) or MutS beta (MSH2-MSH3). Part of the BRCA1-associated genome surveillance complex (BASC), which contains BRCA1, MSH2, MSH6, MLH1, ATM, BLM, PMS2 and the RAD50-MRE11-NBS1 protein complex. This association could be a dynamic process changing throughout the cell cycle and within subnuclear domains. Interacts with MTMR15/FAN1.

The protein resides in the nucleus. The enzyme catalyses ATP + H2O = ADP + phosphate + H(+). Its function is as follows. Component of the post-replicative DNA mismatch repair system (MMR). Heterodimerizes with MLH1 to form MutL alpha. DNA repair is initiated by MutS alpha (MSH2-MSH6) or MutS beta (MSH2-MSH3) binding to a dsDNA mismatch, then MutL alpha is recruited to the heteroduplex. Assembly of the MutL-MutS-heteroduplex ternary complex in presence of RFC and PCNA is sufficient to activate endonuclease activity of PMS2. It introduces single-strand breaks near the mismatch and thus generates new entry points for the exonuclease EXO1 to degrade the strand containing the mismatch. DNA methylation would prevent cleavage and therefore assure that only the newly mutated DNA strand is going to be corrected. MutL alpha (MLH1-PMS2) interacts physically with the clamp loader subunits of DNA polymerase III, suggesting that it may play a role to recruit the DNA polymerase III to the site of the MMR. Also implicated in DNA damage signaling, a process which induces cell cycle arrest and can lead to apoptosis in case of major DNA damages. Possesses an ATPase activity, but in the absence of gross structural changes, ATP hydrolysis may not be necessary for proficient mismatch repair. In Homo sapiens (Human), this protein is Mismatch repair endonuclease PMS2.